A 238-amino-acid chain; its full sequence is uncharacterized protein (238 aa).

The 64-residue stretch at 1-64 (MRLDKYLSKS…KPKKNVYLML (64 aa)) folds into the S4 RNA-binding domain. Catalysis depends on Asp-103, which acts as the Nucleophile.

The protein belongs to the pseudouridine synthase RsuA family.

The enzyme catalyses a uridine in RNA = a pseudouridine in RNA. This is an uncharacterized protein from Aquifex aeolicus (strain VF5).